The primary structure comprises 434 residues: Arrestin domain-containing protein 1 (434 aa).

Positions 295-345 are disordered; it reads PGPGSSPGLLSPVVPSAPPQEEAEAVASGPHFSDPVSLSTKSHSQQQPLST. Residues 330-342 are compositionally biased toward polar residues; that stretch reads VSLSTKSHSQQQP. 2 consecutive short sequence motifs (PPxY motif) follow at residues 401 to 404 and 414 to 417; these read PPEY and PPSY.

This sequence belongs to the arrestin family. In terms of assembly, interacts (via PPxY motifs) with ITCH (via WW domains); the interaction is direct and participates in the recruitment of the ubiquitin-protein ligase ITCH to the NOTCH1 receptor. Interacts with ARRB1 and ARRB2; the interaction is direct. Interacts with TSG101; may recruit TSG101 to the plasma membrane. Interacts (via PPxY motifs) with WWP2 (via WW domains); ubiquitinates ARRDC1. Interacts with SLC11A2; controls the incorporation of SLC11A2 into extracellular vesicles through an ubiquitination-dependent mechanism. Interacts with WWP1 (via WW domains). Interacts with NEDD4 (via WW domains). Interacts with PDCD6IP. Post-translationally, ubiquitinated. Ubiquitination by WWP2; promotes localization to extracellular microvesicles. Ubiquitinated by WWP1.

The protein localises to the cell membrane. Functionally, functions as an adapter recruiting ubiquitin-protein ligases to their specific substrates. Through an ubiquitination-dependent mechanism plays for instance a role in the incorporation of SLC11A2 into extracellular vesicles. More generally, plays a role in the extracellular transport of proteins between cells through the release in the extracellular space of microvesicles. By participating in the ITCH-mediated ubiquitination and subsequent degradation of NOTCH1, negatively regulates the NOTCH signaling pathway. In Rattus norvegicus (Rat), this protein is Arrestin domain-containing protein 1.